The sequence spans 260 residues: Carbonic anhydrase (260 aa).

Residues 1 to 31 (MAHAWGYGPADGPESWAESFPIANGPRQSPI) are disordered. The 257-residue stretch at 3–259 (HAWGYGPADG…LKGRKVRASF (257 aa)) folds into the Alpha-carbonic anhydrase domain. Residue histidine 64 is the Proton acceptor of the active site. 3 residues coordinate Zn(2+): histidine 94, histidine 96, and histidine 119. Residue tyrosine 127 is part of the active site. 198 to 199 (TT) serves as a coordination point for substrate.

The protein belongs to the alpha-carbonic anhydrase family. Requires Zn(2+) as cofactor.

The catalysed reaction is hydrogencarbonate + H(+) = CO2 + H2O. In terms of biological role, reversible hydration of carbon dioxide. This Danio rerio (Zebrafish) protein is Carbonic anhydrase (cahz).